The chain runs to 489 residues: MDKKSGGTKAIEEATVPLLECHNAAEEGGGMKREIWIETKKIWYIVGPSIFTGLATYSILIITQAFAGHLGDLELAAISIINNFTLGFNYGLLLGMASALETLCGQAFGAREYYMLGVYMQRYWIILFLCCILLLPMYLFATPILKFIGQSDDIAELTGTIALWVIPVHFAFAFFFPLNRFLQCQLKNKVIAISAGVSLAVHILVCWFFVYGYKLGIIGTMASVNVPWWLNIFILFLYSTRGGCTLTWTGFSSEAFTGLLELTKLSASSGIMLCLENWYYKILMLMTGNLVNAKIAVDSLSICMSVNGWEMMIPLAFFAGTGVRVANELGAGNGKGARFATIVSITLSLMIGLFFTVIIVIFHDQIGSIFSSSEAVLNAVDNLSVLLAFTVLLNSVQPVLSGVAVGSGWQSYVAYINLGCYYLIGLPFGLTMGWIFKFGVKGIWAGMIFGGTAIQTLILIIITTRCDWDNEAHKSSVRIKKWLVSDAGN.

Transmembrane regions (helical) follow at residues Ile42–Ile62, Leu75–Gly95, Ile125–Leu145, Leu157–Pro177, Val190–Val210, Ile217–Leu237, Ile271–Val291, Leu300–Gly320, Ile342–Phe362, Val385–Val405, Ile416–Phe436, and Gly442–Ile462.

The protein belongs to the multi antimicrobial extrusion (MATE) (TC 2.A.66.1) family.

It is found in the membrane. The protein is Protein DETOXIFICATION 26 of Arabidopsis thaliana (Mouse-ear cress).